Here is an 815-residue protein sequence, read N- to C-terminus: Protein-glutamine gamma-glutamyltransferase K (815 aa).

Over residues 1 to 10 the composition is skewed to basic and acidic residues; that stretch reads MEGPRSDVGR. Disordered stretches follow at residues 1–48 and 62–101; these read MEGP…SFWA and DDWGPEPSGSRSRGTSSRGRDSRGGRRPESRGSGVNAAGD. Residues 16–25 show a composition bias toward pro residues; it reads WQPPTTPSPE. A Phosphothreonine modification is found at Thr-21. A phosphoserine mark is found at Ser-23, Ser-71, Ser-83, Ser-91, and Ser-94. Positions 66–78 are enriched in low complexity; sequence PEPSGSRSRGTSS. Basic and acidic residues predominate over residues 79–91; sequence RGRDSRGGRRPES. Residues Cys-376, His-435, and Asp-458 contribute to the active site. Ca(2+)-binding residues include Asn-498, Asp-500, Glu-547, and Glu-552. The tract at residues 791-815 is disordered; it reads GSGFSDAGGDSRSGENIPMAYRGGA. The residue at position 803 (Ser-803) is a Phosphoserine.

It belongs to the transglutaminase superfamily. Transglutaminase family. As to quaternary structure, interacts with PLAAT4. It depends on Ca(2+) as a cofactor. Tyrosine-phosphorylated. Post-translationally, palmitoylated. In terms of processing, the membrane anchorage region possesses a cluster of five cysteines within which fatty acid(s) may become thioester-linked. It is subject to phorbol ester-stimulated phosphorylation and is hypersensitive to proteolysis, which releases the enzyme in a soluble form. Expressed in large amounts in epithelial tissues (lung, liver and kidney).

The protein localises to the membrane. It carries out the reaction L-glutaminyl-[protein] + L-lysyl-[protein] = [protein]-L-lysyl-N(6)-5-L-glutamyl-[protein] + NH4(+). In terms of biological role, catalyzes the cross-linking of proteins and the conjugation of polyamines to proteins. Responsible for cross-linking epidermal proteins during formation of the stratum corneum. Involved in cell proliferation. The chain is Protein-glutamine gamma-glutamyltransferase K (Tgm1) from Mus musculus (Mouse).